The following is a 544-amino-acid chain: Chaperonin GroEL (544 aa).

ATP-binding positions include 29-32 (TLGP), 86-90 (DGTTT), glycine 413, 476-478 (NAA), and aspartate 492.

Belongs to the chaperonin (HSP60) family. As to quaternary structure, forms a cylinder of 14 subunits composed of two heptameric rings stacked back-to-back. Interacts with the co-chaperonin GroES.

Its subcellular location is the cytoplasm. The catalysed reaction is ATP + H2O + a folded polypeptide = ADP + phosphate + an unfolded polypeptide.. Together with its co-chaperonin GroES, plays an essential role in assisting protein folding. The GroEL-GroES system forms a nano-cage that allows encapsulation of the non-native substrate proteins and provides a physical environment optimized to promote and accelerate protein folding. In Bacillus anthracis (strain A0248), this protein is Chaperonin GroEL.